A 356-amino-acid chain; its full sequence is MITTGTPTTRRSAAGTAGADLCPVERCGEPARPGGRLERQQPSPLSPGQRPLADANARRPVAVFAETFGLLAGQLDRQTRREGRAMLRLIDSTPIPLGKLCGWAKSNGRIRGMKMHVVYDPDSDCPRLLDITDANVNDAQIGRTIAIESGATYIFDKGYCHYGWWTAIAEAKAFFVTRPKSNMGLKVVRQRRIKVAEGDGFTVIDDATVRLASKGDSKLPIPLRRLTVKRADGDTITLLTNDRKRPAVAIAALYKGRWQIELLFRWIKQHLKIRSFLGNNDNAVRLQLFAAMIAYALLRIAARLNRITMPILRFTDLVIRCLFERRDIAAIERPPPVNPSHRRPRCSPHQMSFAYV.

Low complexity predominate over residues 1 to 19 (MITTGTPTTRRSAAGTAGA). Disordered stretches follow at residues 1–54 (MITT…PLAD) and 334–356 (PPPV…FAYV).

The protein belongs to the transposase 11 family.

This Sinorhizobium fredii (strain NBRC 101917 / NGR234) protein is Putative transposase y4zB.